Here is a 263-residue protein sequence, read N- to C-terminus: Taurine import ATP-binding protein TauB (263 aa).

The ABC transporter domain occupies 4 to 235; sequence LTAEAISLSF…RYAAGETVRS (232 aa). An ATP-binding site is contributed by 40–47; the sequence is GPSGCGKS.

It belongs to the ABC transporter superfamily. Taurine importer (TC 3.A.1.17.1) family. In terms of assembly, the complex is composed of two ATP-binding proteins (TauB), two transmembrane proteins (TauC) and a solute-binding protein (TauA).

It is found in the cell inner membrane. The enzyme catalyses taurine(out) + ATP + H2O = taurine(in) + ADP + phosphate + H(+). In terms of biological role, part of the ABC transporter complex TauABC involved in taurine import. Responsible for energy coupling to the transport system. The polypeptide is Taurine import ATP-binding protein TauB (Pseudomonas aeruginosa (strain UCBPP-PA14)).